Here is a 364-residue protein sequence, read N- to C-terminus: Fructose-bisphosphate aldolase A (364 aa).

T9 bears the Phosphothreonine mark. Phosphoserine occurs at positions 36 and 39. Residue K42 is modified to N6-acetyllysine; alternate. Residue K42 forms a Glycyl lysine isopeptide (Lys-Gly) (interchain with G-Cter in SUMO1); alternate linkage. K42 participates in a covalent cross-link: Glycyl lysine isopeptide (Lys-Gly) (interchain with G-Cter in SUMO2); alternate. R43 contacts beta-D-fructose 1,6-bisphosphate. S46 carries the post-translational modification Phosphoserine. K99 is modified (N6-(2-hydroxyisobutyryl)lysine). N6-acetyllysine is present on K108. K111 is modified (N6-acetyllysine; alternate). An N6-malonyllysine; alternate modification is found at K111. Residue S132 is modified to Phosphoserine. Position 147 is an N6-(2-hydroxyisobutyryl)lysine (K147). The active-site Proton acceptor is E188. K230 acts as the Schiff-base intermediate with dihydroxyacetone-P in catalysis. Position 272 is a phosphoserine (S272). Beta-D-fructose 1,6-bisphosphate is bound by residues 272-274 (SGG), S301, and R304. K312 is subject to N6-malonyllysine. K330 is subject to N6-acetyllysine. N361 bears the Deamidated asparagine; in form beta mark.

The protein belongs to the class I fructose-bisphosphate aldolase family. In terms of assembly, homotetramer. Interacts with SNX9 and WAS. Interacts with FBP2; the interaction blocks FBP2 inhibition by physiological concentrations of AMP and reduces inhibition by Ca(2+). Post-translationally, asn-361 in form alpha is deaminated to Asp in form beta.

The protein localises to the cytoplasm. The protein resides in the myofibril. Its subcellular location is the sarcomere. It is found in the i band. It localises to the m line. The enzyme catalyses beta-D-fructose 1,6-bisphosphate = D-glyceraldehyde 3-phosphate + dihydroxyacetone phosphate. The protein operates within carbohydrate degradation; glycolysis; D-glyceraldehyde 3-phosphate and glycerone phosphate from D-glucose: step 4/4. In terms of biological role, plays a key role in glycolysis and gluconeogenesis. In addition, may also function as scaffolding protein. The sequence is that of Fructose-bisphosphate aldolase A (ALDOA) from Oryctolagus cuniculus (Rabbit).